A 135-amino-acid chain; its full sequence is Sex-regulated protein janus-A (135 aa).

Residue lysine 37 participates in substrate binding. Histidine 63 serves as the catalytic Proton acceptor. 104-106 (SQG) lines the substrate pocket.

Belongs to the janus family.

Functionally, janA and janB regulate somatic sex differentiation. The chain is Sex-regulated protein janus-A (janA) from Drosophila orena (Fruit fly).